The following is a 439-amino-acid chain: MLSTDTIYALSSGSLPAGVAIIRVSGPETADALVRLCGTLPPPRIATLRTIRTRNGETLDSGLVLYFPTPASFTGEDCCELQVHGGRAVVSAILDELAATGGLRHAEAGEFARRAFQNGKLDLVEVEGLADLIAAETEMQRRLAIEQSGGGQSALYAGWARRLTHSRAMIEAELDFADEDDVPGSVSAVIWEDVGRLRQEIDGHIARAGLAEIIRDGLKIVIAGEPNAGKSSLLNALARRDIAIVTEVAGTTRDVLSVDLSLAGFSVKLFDTAGLRETDELVEREGIRRARQVIADADLVLLLSEKPGHFRIDEVLPENVPVIRVATKVDRPSPSWAPSDADIFLSTRTGEGMADLLTALQSHLPDLAGRTALAMPSRKRHVDCLRQASAALERSLISSDLELRAEQLRQAGDALGRITGRVDVENLLDVIFSEFCIGK.

Positions 23, 80, and 120 each coordinate (6S)-5-formyl-5,6,7,8-tetrahydrofolate. Residues 217-365 (GLKIVIAGEP…LLTALQSHLP (149 aa)) enclose the TrmE-type G domain. Asn-227 is a binding site for K(+). Residues 227–232 (NAGKSS), 246–252 (TEVAGTT), and 271–274 (DTAG) contribute to the GTP site. Residue Ser-231 coordinates Mg(2+). K(+)-binding residues include Thr-246, Val-248, and Thr-251. Mg(2+) is bound at residue Thr-252. Lys-439 provides a ligand contact to (6S)-5-formyl-5,6,7,8-tetrahydrofolate.

It belongs to the TRAFAC class TrmE-Era-EngA-EngB-Septin-like GTPase superfamily. TrmE GTPase family. Homodimer. Heterotetramer of two MnmE and two MnmG subunits. Requires K(+) as cofactor.

It localises to the cytoplasm. In terms of biological role, exhibits a very high intrinsic GTPase hydrolysis rate. Involved in the addition of a carboxymethylaminomethyl (cmnm) group at the wobble position (U34) of certain tRNAs, forming tRNA-cmnm(5)s(2)U34. In Rhizobium meliloti (strain 1021) (Ensifer meliloti), this protein is tRNA modification GTPase MnmE.